Reading from the N-terminus, the 135-residue chain is uncharacterized protein (135 aa).

In terms of domain architecture, Response regulatory spans 13 to 129 (QVLIAENSRF…KILEKVNAAI (117 aa)). Asp64 carries the post-translational modification 4-aspartylphosphate.

This is an uncharacterized protein from Leptospira interrogans serogroup Icterohaemorrhagiae serovar copenhageni (strain Fiocruz L1-130).